Consider the following 309-residue polypeptide: NAD-dependent protein deacylase sirtuin-5A, mitochondrial (309 aa).

A mitochondrion-targeting transit peptide spans 1 to 35 (MILLTFHTRRLVSHAYCGLKPASQKKSIALEMTRP). A Deacetylase sirtuin-type domain is found at 36-306 (SSNLADFREA…PPALARHETE (271 aa)). Residue 57-76 (GAGVSAESGVPTFRGAGGYW) coordinates NAD(+). Residues tyrosine 101 and arginine 104 each contribute to the substrate site. 139–142 (QNID) is a binding site for NAD(+). The active-site Proton acceptor is histidine 157. Positions 165, 168, 206, and 211 each coordinate Zn(2+). NAD(+)-binding positions include 248–250 (GTS), 274–276 (NME), and cysteine 292.

The protein belongs to the sirtuin family. Class III subfamily. Zn(2+) serves as cofactor.

The protein resides in the mitochondrion. It is found in the cytoplasm. Its subcellular location is the cytosol. It localises to the nucleus. The catalysed reaction is N(6)-malonyl-L-lysyl-[protein] + NAD(+) + H2O = 2''-O-malonyl-ADP-D-ribose + nicotinamide + L-lysyl-[protein]. It carries out the reaction N(6)-succinyl-L-lysyl-[protein] + NAD(+) + H2O = 2''-O-succinyl-ADP-D-ribose + nicotinamide + L-lysyl-[protein]. The enzyme catalyses N(6)-glutaryl-L-lysyl-[protein] + NAD(+) + H2O = 2''-O-glutaryl-ADP-D-ribose + nicotinamide + L-lysyl-[protein]. NAD-dependent lysine demalonylase, desuccinylase and deglutarylase that specifically removes malonyl, succinyl and glutaryl groups on target proteins. Has weak NAD-dependent protein deacetylase activity; however this activity may not be physiologically relevant in vivo. The polypeptide is NAD-dependent protein deacylase sirtuin-5A, mitochondrial (sirt5-a) (Xenopus laevis (African clawed frog)).